A 396-amino-acid chain; its full sequence is Elongation factor Tu (396 aa).

Residues 10-205 form the tr-type G domain; sequence KPHVNIGTIG…AVDESIPDPV (196 aa). Residues 19 to 26 form a G1 region; sequence GHVDHGKT. Residue 19-26 participates in GTP binding; that stretch reads GHVDHGKT. Thr-26 contacts Mg(2+). The G2 stretch occupies residues 62 to 66; the sequence is GITIN. Residues 83–86 form a G3 region; the sequence is DAPG. GTP is bound by residues 83 to 87 and 138 to 141; these read DAPGH and NKAD. A G4 region spans residues 138–141; that stretch reads NKAD. The G5 stretch occupies residues 175 to 177; that stretch reads SAL.

The protein belongs to the TRAFAC class translation factor GTPase superfamily. Classic translation factor GTPase family. EF-Tu/EF-1A subfamily. As to quaternary structure, monomer.

It is found in the cytoplasm. The catalysed reaction is GTP + H2O = GDP + phosphate + H(+). In terms of biological role, GTP hydrolase that promotes the GTP-dependent binding of aminoacyl-tRNA to the A-site of ribosomes during protein biosynthesis. The polypeptide is Elongation factor Tu (Mycobacterium avium (strain 104)).